Reading from the N-terminus, the 151-residue chain is UPF0208 membrane protein Spro_3315 (151 aa).

2 consecutive transmembrane segments (helical) span residues 46–64 (FAVR…WQIA) and 70–90 (GPAI…LWWL).

It belongs to the UPF0208 family.

It is found in the cell inner membrane. In Serratia proteamaculans (strain 568), this protein is UPF0208 membrane protein Spro_3315.